The chain runs to 164 residues: MTVRLIVKYPDPRLRAAAEPVTTFDEGLRKLADDLLDTMRAAPGIGITAPHIGISKRVVVLELDRAAGPKIYINPEIVWACEEKIRHQEGSVSMPGVVDEVERHARIRLRYQDLDGNEQTEESDGLLAVCHQHEIDQLDGIFWVQRLSRLRRERLIKRYEKLQR.

E134 is an active-site residue.

It belongs to the polypeptide deformylase family.

This chain is Peptide deformylase-like, found in Brucella melitensis biotype 1 (strain ATCC 23456 / CCUG 17765 / NCTC 10094 / 16M).